Consider the following 431-residue polypeptide: Enolase (431 aa).

(2R)-2-phosphoglycerate is bound at residue Gln-166. Residue Glu-208 is the Proton donor of the active site. Positions 245, 288, and 315 each coordinate Mg(2+). (2R)-2-phosphoglycerate contacts are provided by Lys-340, Arg-369, Ser-370, and Lys-391. Lys-340 serves as the catalytic Proton acceptor.

The protein belongs to the enolase family. Requires Mg(2+) as cofactor.

Its subcellular location is the cytoplasm. The protein resides in the secreted. The protein localises to the cell surface. The enzyme catalyses (2R)-2-phosphoglycerate = phosphoenolpyruvate + H2O. It participates in carbohydrate degradation; glycolysis; pyruvate from D-glyceraldehyde 3-phosphate: step 4/5. In terms of biological role, catalyzes the reversible conversion of 2-phosphoglycerate (2-PG) into phosphoenolpyruvate (PEP). It is essential for the degradation of carbohydrates via glycolysis. This is Enolase from Clostridium tetani (strain Massachusetts / E88).